A 286-amino-acid chain; its full sequence is 4-diphosphocytidyl-2-C-methyl-D-erythritol kinase (286 aa).

Lysine 8 is a catalytic residue. An ATP-binding site is contributed by 92–102; sequence PVSAGLAGGST. The active site involves aspartate 134.

It belongs to the GHMP kinase family. IspE subfamily.

It catalyses the reaction 4-CDP-2-C-methyl-D-erythritol + ATP = 4-CDP-2-C-methyl-D-erythritol 2-phosphate + ADP + H(+). It participates in isoprenoid biosynthesis; isopentenyl diphosphate biosynthesis via DXP pathway; isopentenyl diphosphate from 1-deoxy-D-xylulose 5-phosphate: step 3/6. Functionally, catalyzes the phosphorylation of the position 2 hydroxy group of 4-diphosphocytidyl-2C-methyl-D-erythritol. This chain is 4-diphosphocytidyl-2-C-methyl-D-erythritol kinase, found in Caldicellulosiruptor bescii (strain ATCC BAA-1888 / DSM 6725 / KCTC 15123 / Z-1320) (Anaerocellum thermophilum).